A 474-amino-acid chain; its full sequence is ATP synthase subunit beta (474 aa).

151–158 (GGAGVGKT) lines the ATP pocket.

This sequence belongs to the ATPase alpha/beta chains family. F-type ATPases have 2 components, CF(1) - the catalytic core - and CF(0) - the membrane proton channel. CF(1) has five subunits: alpha(3), beta(3), gamma(1), delta(1), epsilon(1). CF(0) has four main subunits: a(1), b(1), b'(1) and c(9-12).

It is found in the cell inner membrane. It catalyses the reaction ATP + H2O + 4 H(+)(in) = ADP + phosphate + 5 H(+)(out). In terms of biological role, produces ATP from ADP in the presence of a proton gradient across the membrane. The catalytic sites are hosted primarily by the beta subunits. The chain is ATP synthase subunit beta from Roseobacter denitrificans (strain ATCC 33942 / OCh 114) (Erythrobacter sp. (strain OCh 114)).